A 237-amino-acid chain; its full sequence is Corrinoid adenosyltransferase MMAB (237 aa).

The transit peptide at 1-26 directs the protein to the mitochondrion; that stretch reads MAVWLFGGRLGLRGRLSACRLLCPRF. The interval 30–49 is disordered; sequence GPQGGEDGDRLQPSSTAAKI. Residues 54–57, 62–63, and Lys-72 each bind ATP; these read TKTG and SS. Ser-128 bears the Phosphoserine mark. Residue 184-188 participates in ATP binding; sequence RRAER. An N6-succinyllysine modification is found at Lys-205. Asn-208 contributes to the ATP binding site. Lys-224 is subject to N6-acetyllysine; alternate. Lys-224 carries the N6-succinyllysine; alternate modification.

This sequence belongs to the Cob(I)alamin adenosyltransferase family. In terms of assembly, homotrimer.

The protein resides in the mitochondrion. The catalysed reaction is cob(I)alamin-[corrinoid adenosyltransferase] + ATP = apo-[corrinoid adenosyltransferase] + adenosylcob(III)alamin + triphosphate. In terms of biological role, converts cob(I)alamin to adenosylcobalamin (adenosylcob(III)alamin), a coenzyme for methylmalonyl-CoA mutase, therefore participates in the final step of the vitamin B12 conversion. Generates adenosylcobalamin (AdoCbl) and directly delivers the cofactor to MUT in a transfer that is stimulated by ATP-binding to MMAB and gated by MMAA. This chain is Corrinoid adenosyltransferase MMAB, found in Mus musculus (Mouse).